The primary structure comprises 90 residues: [Leu8]-phyllolitorin (90 aa).

An N-terminal signal peptide occupies residues 1 to 30; the sequence is MSAVPFTRVLLISGFLAHLLLSTFVTLTVC. Residues 31-48 constitute a propeptide that is removed on maturation; that stretch reads KEVTEESDDLSKRNVLQR. The residue at position 49 (Q49) is a Pyrrolidone carboxylic acid. M57 is subject to Methionine amide. A propeptide spanning residues 61–90 is cleaved from the precursor; sequence SLENTNRRSDEDMEISALFRGSPLKVKRSD.

Belongs to the bombesin/neuromedin-B/ranatensin family. Expressed by the skin glands.

Its subcellular location is the secreted. The polypeptide is [Leu8]-phyllolitorin (Phyllomedusa sauvagei (Sauvage's leaf frog)).